The following is a 1099-amino-acid chain: Carbamoyl phosphate synthase large chain (1099 aa).

The carboxyphosphate synthetic domain stretch occupies residues 1-402 (MPKREDIKRI…ALGKALRSLE (402 aa)). ATP-binding residues include R129, R169, G175, G176, E208, V210, E215, G241, I242, H243, Q285, and E299. An ATP-grasp 1 domain is found at 133–328 (KETMEKAGLE…IAKVAALLAV (196 aa)). Residues Q285, E299, and N301 each contribute to the Mg(2+) site. The Mn(2+) site is built by Q285, E299, and N301. The interval 403–541 (LDAAPKLDLE…STYNGVENEA (139 aa)) is oligomerization domain. The interval 542 to 944 (VPSDREKIMI…AFAKAQIAAG (403 aa)) is carbamoyl phosphate synthetic domain. In terms of domain architecture, ATP-grasp 2 spans 666-857 (AKLLKQIGLK…VARIAAKIMV (192 aa)). ATP contacts are provided by R702, K741, L743, E748, G773, V774, H775, S776, Q816, and E828. Mg(2+)-binding residues include Q816, E828, and N830. Mn(2+) contacts are provided by Q816, E828, and N830. The MGS-like domain maps to 945–1099 (NPLPTTGAIL…VRRLTDTWKM (155 aa)). The allosteric domain stretch occupies residues 945-1099 (NPLPTTGAIL…VRRLTDTWKM (155 aa)).

It belongs to the CarB family. As to quaternary structure, composed of two chains; the small (or glutamine) chain promotes the hydrolysis of glutamine to ammonia, which is used by the large (or ammonia) chain to synthesize carbamoyl phosphate. Tetramer of heterodimers (alpha,beta)4. Requires Mg(2+) as cofactor. It depends on Mn(2+) as a cofactor.

It catalyses the reaction hydrogencarbonate + L-glutamine + 2 ATP + H2O = carbamoyl phosphate + L-glutamate + 2 ADP + phosphate + 2 H(+). It carries out the reaction hydrogencarbonate + NH4(+) + 2 ATP = carbamoyl phosphate + 2 ADP + phosphate + 2 H(+). It functions in the pathway amino-acid biosynthesis; L-arginine biosynthesis; carbamoyl phosphate from bicarbonate: step 1/1. It participates in pyrimidine metabolism; UMP biosynthesis via de novo pathway; (S)-dihydroorotate from bicarbonate: step 1/3. In terms of biological role, large subunit of the glutamine-dependent carbamoyl phosphate synthetase (CPSase). CPSase catalyzes the formation of carbamoyl phosphate from the ammonia moiety of glutamine, carbonate, and phosphate donated by ATP, constituting the first step of 2 biosynthetic pathways, one leading to arginine and/or urea and the other to pyrimidine nucleotides. The large subunit (synthetase) binds the substrates ammonia (free or transferred from glutamine from the small subunit), hydrogencarbonate and ATP and carries out an ATP-coupled ligase reaction, activating hydrogencarbonate by forming carboxy phosphate which reacts with ammonia to form carbamoyl phosphate. This is Carbamoyl phosphate synthase large chain from Thermotoga maritima (strain ATCC 43589 / DSM 3109 / JCM 10099 / NBRC 100826 / MSB8).